A 548-amino-acid chain; its full sequence is WEB family protein At1g12150 (548 aa).

The stretch at 71 to 544 forms a coiled coil; the sequence is KEFMKIKQKL…ELQRWRQQEN (474 aa). Residues 430–448 are compositionally biased toward basic and acidic residues; sequence VREEMKMISQKQESKKQDE. The segment at 430-455 is disordered; that stretch reads VREEMKMISQKQESKKQDEESSGSKI.

This sequence belongs to the WEB family.

This chain is WEB family protein At1g12150, found in Arabidopsis thaliana (Mouse-ear cress).